Reading from the N-terminus, the 262-residue chain is High-affinity zinc uptake system membrane protein ZnuB (262 aa).

7 helical membrane-spanning segments follow: residues 8–28 (GWLA…FIVW), 54–74 (INSF…LAWL), 84–104 (TVLN…ISLI), 129–149 (ITIS…WHSI), 179–199 (FTIA…LLII), 215–235 (VIIA…LSVF), and 238–254 (TPAS…LCLI).

This sequence belongs to the ABC-3 integral membrane protein family.

The protein localises to the cell membrane. Functionally, involved in the high-affinity zinc uptake transport system. The chain is High-affinity zinc uptake system membrane protein ZnuB (znuB) from Buchnera aphidicola subsp. Acyrthosiphon pisum (strain APS) (Acyrthosiphon pisum symbiotic bacterium).